The chain runs to 88 residues: Large ribosomal subunit protein eL31 (88 aa).

This sequence belongs to the eukaryotic ribosomal protein eL31 family.

The chain is Large ribosomal subunit protein eL31 from Saccharolobus islandicus (strain Y.N.15.51 / Yellowstone #2) (Sulfolobus islandicus).